A 507-amino-acid polypeptide reads, in one-letter code: Maturase K (507 aa).

Belongs to the intron maturase 2 family. MatK subfamily.

It is found in the plastid. Its subcellular location is the chloroplast. In terms of biological role, usually encoded in the trnK tRNA gene intron. Probably assists in splicing its own and other chloroplast group II introns. The sequence is that of Maturase K from Magnolia figo (Banana shrub).